The following is a 420-amino-acid chain: Tyrosine--tRNA ligase (420 aa).

Y36 is an L-tyrosine binding site. The 'HIGH' region motif lies at 41–50 (PTADSMHIGH). The L-tyrosine site is built by Y170 and Q174. The 'KMSKS' region motif lies at 231–235 (KFGKS). ATP is bound at residue K234. An S4 RNA-binding domain is found at 353–420 (TNIVDFIVEA…KKKYFMVKYK (68 aa)).

The protein belongs to the class-I aminoacyl-tRNA synthetase family. TyrS type 1 subfamily. As to quaternary structure, homodimer.

Its subcellular location is the cytoplasm. It carries out the reaction tRNA(Tyr) + L-tyrosine + ATP = L-tyrosyl-tRNA(Tyr) + AMP + diphosphate + H(+). Catalyzes the attachment of tyrosine to tRNA(Tyr) in a two-step reaction: tyrosine is first activated by ATP to form Tyr-AMP and then transferred to the acceptor end of tRNA(Tyr). The polypeptide is Tyrosine--tRNA ligase (Staphylococcus carnosus (strain TM300)).